Consider the following 366-residue polypeptide: Pectinesterase A (366 aa).

Positions 1-24 (MLKTISGTLALSLIIAASVHQAQA) are cleaved as a signal peptide. Residues T109 and Q153 each coordinate substrate. D178 acts as the Proton donor in catalysis. C192 and C212 form a disulfide bridge. The active-site Nucleophile is the D199. Residues R219, N226, Y230, R267, W269, and T272 each contribute to the substrate site.

Belongs to the pectinesterase family. Monomer.

It localises to the secreted. It carries out the reaction [(1-&gt;4)-alpha-D-galacturonosyl methyl ester](n) + n H2O = [(1-&gt;4)-alpha-D-galacturonosyl](n) + n methanol + n H(+). It participates in glycan metabolism; pectin degradation; 2-dehydro-3-deoxy-D-gluconate from pectin: step 1/5. Functionally, catalyzes the first step in maceration and soft-rotting of plant tissue. This is Pectinesterase A from Dickeya dadantii (strain 3937) (Erwinia chrysanthemi (strain 3937)).